The sequence spans 210 residues: 23.5 kDa heat shock protein, mitochondrial (210 aa).

Residues 1–20 (MASSSALALRRLLSSSTVAV) constitute a mitochondrion transit peptide. One can recognise a sHSP domain in the interval 102–210 (MGASGVRRGW…RNNIRHINVD (109 aa)).

Belongs to the small heat shock protein (HSP20) family. As to quaternary structure, may form oligomeric structures.

The protein localises to the mitochondrion. The protein is 23.5 kDa heat shock protein, mitochondrial (HSP23.5) of Arabidopsis thaliana (Mouse-ear cress).